The primary structure comprises 285 residues: Purine biosynthesis transcriptional repressor PurR (285 aa).

A DNA binding domain region spans residues methionine 1–proline 73. The tract at residues lysine 74–serine 285 is effector binding domain. Tyrosine 102 is a binding site for guanosine 3',5'-bis(diphosphate). Residues alanine 138, threonine 139, lysine 140, and arginine 160 each contribute to the 5-phospho-alpha-D-ribose 1-diphosphate site. Guanosine 3',5'-bis(diphosphate) contacts are provided by glycine 178 and serine 179. Aspartate 203, aspartate 204, phenylalanine 205, lysine 207, and alanine 208 together coordinate 5-phospho-alpha-D-ribose 1-diphosphate. A guanosine 3',5'-bis(diphosphate)-binding site is contributed by lysine 207. The guanosine 3',5'-bis(diphosphate) site is built by glycine 209, glycine 210, and threonine 211. Threonine 211 is a binding site for 5-phospho-alpha-D-ribose 1-diphosphate.

The protein belongs to the purine/pyrimidine phosphoribosyltransferase family. PurR subfamily. In terms of assembly, homodimer.

The binding of PurR to DNA, and therefore the repressor activity, is influenced by interaction with the effector molecules 5-phosphoribosyl 1-pyrophosphate (PRPP) and (p)ppGpp. PRPP binds to PurR and reduces affinity of PurR for DNA, which inhibits the repressor activity and induces transcription of the target genes. On the contrary, (p)ppGpp enhances binding of PurR to DNA and repression of the transcription. PRPP and (p)ppGpp compete for PurR binding and allosteric control of transcription. ppGpp maintains PurR-DNA interaction and prevents PRPP from de-repressing PurR regulation during conditions that lead to (p)ppGpp induction, such as upon amino acid starvation. Its function is as follows. DNA-binding transcriptional repressor that controls the expression of a number of genes involved in the synthesis, metabolism and transport of purines. In response to a signal of excess adenine, represses the transcription of the pur operon, which encodes enzymes of the purine biosynthetic pathway. It also represses the expression of the purA and purR genes. In addition, controls the expression of several other genes or operons, which encode enzymes or transporters playing a role in purine nucleotide metabolism. Acts by binding directly to specific DNA sequences, named PurBoxes, in the upstream control regions of affected genes. Two PurBoxes are required for high-affinity PurR binding. Also responds to amino acid starvation via (p)ppGpp, which strongly increases PurR activity and repression of purine nucleotide biosynthesis genes. The chain is Purine biosynthesis transcriptional repressor PurR from Bacillus subtilis (strain 168).